A 123-amino-acid chain; its full sequence is Large ribosomal subunit protein bL12 (123 aa).

This sequence belongs to the bacterial ribosomal protein bL12 family. Homodimer. Part of the ribosomal stalk of the 50S ribosomal subunit. Forms a multimeric L10(L12)X complex, where L10 forms an elongated spine to which 2 to 4 L12 dimers bind in a sequential fashion. Binds GTP-bound translation factors.

Functionally, forms part of the ribosomal stalk which helps the ribosome interact with GTP-bound translation factors. Is thus essential for accurate translation. The chain is Large ribosomal subunit protein bL12 from Acholeplasma laidlawii (strain PG-8A).